The following is a 559-amino-acid chain: Phosphoinositide 3-phosphatase (559 aa).

The region spanning S120–F541 is the Myotubularin phosphatase domain. C342 serves as the catalytic Phosphocysteine intermediate.

The protein belongs to the protein-tyrosine phosphatase family. Non-receptor class myotubularin subfamily.

The protein resides in the cytoplasm. It carries out the reaction a 1,2-diacyl-sn-glycero-3-phospho-(1D-myo-inositol-3-phosphate) + H2O = a 1,2-diacyl-sn-glycero-3-phospho-(1D-myo-inositol) + phosphate. Functionally, lipid phosphatase which dephosphorylates phosphatidylinositol 3-monophosphate (PI3P). Involved in the control of PI3P-dependent signaling and in the maintenance of endosomal system integrity. This chain is Phosphoinositide 3-phosphatase, found in Schizosaccharomyces pombe (strain 972 / ATCC 24843) (Fission yeast).